The chain runs to 351 residues: Cell cycle control protein 50B (351 aa).

Over 1-33 the chain is Cytoplasmic; sequence MTWSATARGAHQPDNTAFTQQRLPAWQPLLSAS. A helical transmembrane segment spans residues 34-54; that stretch reads IALPLFFCAGLAFIGLGLGLY. Residues 55-315 lie on the Exoplasmic loop side of the membrane; sequence YSSNGIKELE…SISWMGGKNP (261 aa). N-linked (GlcNAc...) asparagine glycosylation is found at Asn75, Asn213, and Asn286. The helical transmembrane segment at 316–336 threads the bilayer; the sequence is FLGIAYLVVGSLCILTGFVML. The Cytoplasmic portion of the chain corresponds to 337–351; the sequence is VVYIRYQDQDDDDEE.

Belongs to the CDC50/LEM3 family. Component of a P4-ATPase flippase complex which consists of a catalytic alpha subunit and an accessory beta subunit. Interacts with alpha subunits ATP8A1, ATP8B1, ATP8B2 and ATP8B4.

Its subcellular location is the cell membrane. Its function is as follows. Accessory component of a P4-ATPase flippase complex which catalyzes the hydrolysis of ATP coupled to the transport of aminophospholipids from the outer to the inner leaflet of various membranes and ensures the maintenance of asymmetric distribution of phospholipids. Phospholipid translocation also seems to be implicated in vesicle formation and in uptake of lipid signaling molecules. The beta subunit may assist in binding of the phospholipid substrate. Can mediate the export of alpha subunits ATP8A1, ATP8B1, ATP8B2 and ATP8B4 from the ER to the plasma membrane. This Homo sapiens (Human) protein is Cell cycle control protein 50B (TMEM30B).